The primary structure comprises 439 residues: Ribosomal protein uS12 methylthiotransferase RimO (439 aa).

Residues 7 to 119 (KQLCLISLGC…IDILIAKKQN (113 aa)) enclose the MTTase N-terminal domain. Cys-16, Cys-50, Cys-82, Cys-151, Cys-155, and Cys-158 together coordinate [4Fe-4S] cluster. The Radical SAM core domain occupies 137 to 368 (TGSSVHAYVK…ALKHQNHSFK (232 aa)).

The protein belongs to the methylthiotransferase family. RimO subfamily. [4Fe-4S] cluster serves as cofactor.

The protein localises to the cytoplasm. It carries out the reaction L-aspartate(89)-[ribosomal protein uS12]-hydrogen + (sulfur carrier)-SH + AH2 + 2 S-adenosyl-L-methionine = 3-methylsulfanyl-L-aspartate(89)-[ribosomal protein uS12]-hydrogen + (sulfur carrier)-H + 5'-deoxyadenosine + L-methionine + A + S-adenosyl-L-homocysteine + 2 H(+). Catalyzes the methylthiolation of an aspartic acid residue of ribosomal protein uS12. The polypeptide is Ribosomal protein uS12 methylthiotransferase RimO (Helicobacter pylori (strain J99 / ATCC 700824) (Campylobacter pylori J99)).